The primary structure comprises 114 residues: MKKHTLALGLISALFFSFQAHADLSRTSKGALLGAGVGLLSGNGVNGVLKGAAVGAGVGAVTEKGKDGKKARKGAKVGATLGAVAGVLTGNGLEGAIKGAVIGGAGGAIVGKMN.

The protein belongs to the UPF0757 family.

The chain is UPF0757 protein YmgG from Escherichia fergusonii (strain ATCC 35469 / DSM 13698 / CCUG 18766 / IAM 14443 / JCM 21226 / LMG 7866 / NBRC 102419 / NCTC 12128 / CDC 0568-73).